A 353-amino-acid polypeptide reads, in one-letter code: Photosystem II protein D1 (353 aa).

Residue Thr2 is modified to N-acetylthreonine. A Phosphothreonine modification is found at Thr2. 3 helical membrane-spanning segments follow: residues Tyr29 to Ser46, His118 to Leu133, and Trp142 to Ala156. His118 contacts chlorophyll a. Tyr126 serves as a coordination point for pheophytin a. The [CaMn4O5] cluster site is built by Asp170 and Glu189. Residues Phe197 to Leu218 form a helical membrane-spanning segment. His198 contacts chlorophyll a. Residues His215 and Ser264–Phe265 each bind a quinone. Residue His215 coordinates Fe cation. His272 serves as a coordination point for Fe cation. The chain crosses the membrane as a helical span at residues Phe274–Leu288. Positions 332, 333, 342, and 344 each coordinate [CaMn4O5] cluster. The propeptide occupies Ala345–Gly353.

This sequence belongs to the reaction center PufL/M/PsbA/D family. As to quaternary structure, PSII is composed of 1 copy each of membrane proteins PsbA, PsbB, PsbC, PsbD, PsbE, PsbF, PsbH, PsbI, PsbJ, PsbK, PsbL, PsbM, PsbT, PsbX, PsbY, PsbZ, Psb30/Ycf12, at least 3 peripheral proteins of the oxygen-evolving complex and a large number of cofactors. It forms dimeric complexes. It depends on The D1/D2 heterodimer binds P680, chlorophylls that are the primary electron donor of PSII, and subsequent electron acceptors. It shares a non-heme iron and each subunit binds pheophytin, quinone, additional chlorophylls, carotenoids and lipids. D1 provides most of the ligands for the Mn4-Ca-O5 cluster of the oxygen-evolving complex (OEC). There is also a Cl(-1) ion associated with D1 and D2, which is required for oxygen evolution. The PSII complex binds additional chlorophylls, carotenoids and specific lipids. as a cofactor. In terms of processing, tyr-161 forms a radical intermediate that is referred to as redox-active TyrZ, YZ or Y-Z. C-terminally processed by CTPA; processing is essential to allow assembly of the oxygen-evolving complex and thus photosynthetic growth.

The protein resides in the plastid. The protein localises to the chloroplast thylakoid membrane. The enzyme catalyses 2 a plastoquinone + 4 hnu + 2 H2O = 2 a plastoquinol + O2. Its function is as follows. Photosystem II (PSII) is a light-driven water:plastoquinone oxidoreductase that uses light energy to abstract electrons from H(2)O, generating O(2) and a proton gradient subsequently used for ATP formation. It consists of a core antenna complex that captures photons, and an electron transfer chain that converts photonic excitation into a charge separation. The D1/D2 (PsbA/PsbD) reaction center heterodimer binds P680, the primary electron donor of PSII as well as several subsequent electron acceptors. In Barbarea verna (Land cress), this protein is Photosystem II protein D1.